A 492-amino-acid polypeptide reads, in one-letter code: Catalase isozyme 2 (492 aa).

Active-site residues include H65 and N138. Residue Y347 participates in heme binding.

Belongs to the catalase family. As to quaternary structure, homotetramer. It depends on heme as a cofactor. As to expression, high levels in green cotyledons, mature leaf, stem and green hypocotyl.

It is found in the peroxisome. It catalyses the reaction 2 H2O2 = O2 + 2 H2O. In terms of biological role, occurs in almost all aerobically respiring organisms and serves to protect cells from the toxic effects of hydrogen peroxide. This chain is Catalase isozyme 2 (CAT2), found in Cucurbita pepo (Vegetable marrow).